Reading from the N-terminus, the 155-residue chain is Large ribosomal subunit protein uL13 (155 aa).

It belongs to the universal ribosomal protein uL13 family. In terms of assembly, part of the 50S ribosomal subunit.

Functionally, this protein is one of the early assembly proteins of the 50S ribosomal subunit, although it is not seen to bind rRNA by itself. It is important during the early stages of 50S assembly. The polypeptide is Large ribosomal subunit protein uL13 (Aeropyrum pernix (strain ATCC 700893 / DSM 11879 / JCM 9820 / NBRC 100138 / K1)).